We begin with the raw amino-acid sequence, 359 residues long: MSCSHLSTAWSSSALASSASTTRRRSPPRSGLLVRCSLRELRTRIDSVRNTQKITEAMKLVAAAKVRRAQEAVVSSRPFSEALVEVLYNMNQEIQTEDIDLPLTRTRPVKKVALVVLTGERGLCGSFNNNVLKKAETRIDELKQLGLQYTVVSVGKKGNAYFQRRPYIPLERDLEVSSVPTVKDSQAICDLVYSLFVSEEVDKVELLYSKFVSLVRSDPIIQTLLPMSPKGEICDVNGVCVDATEDELFRLTTKEGKLTVEREKVKIETQPFSPVVQFEQDPVQILDALLPLYLNSQILRALQESLASELAARMSAMSSATDNAIELRKNLSIAYNRQRQAKITGEILEIVAGADALAG.

The transit peptide at 1 to 35 (MSCSHLSTAWSSSALASSASTTRRRSPPRSGLLVR) directs the protein to the chloroplast. Cysteine 124 is an active-site residue. Cysteine 234 and cysteine 240 are disulfide-bonded.

The protein belongs to the ATPase gamma chain family. As to quaternary structure, F-type ATPases have 2 components, CF(1) - the catalytic core - and CF(0) - the membrane proton channel. CF(1) has five subunits: alpha(3), beta(3), gamma(1), delta(1), epsilon(1). CF(0) has four main subunits: a, b, b' and c.

It localises to the plastid. It is found in the chloroplast thylakoid membrane. Its function is as follows. Produces ATP from ADP in the presence of a proton gradient across the membrane. The gamma chain is believed to be important in regulating ATPase activity and the flow of protons through the CF(0) complex. In terms of biological role, inceptin is a proteolytic fragment produced by insect larvae that previously ingested the protein. This peptide mediate plant perception of herbivory through the induction of volatile, phenylpropanoid and protease inhibitor defenses such as ethylene, jasmonic acid and salicylic acid for example. This Zea mays (Maize) protein is ATP synthase subunit gamma, chloroplastic.